The primary structure comprises 197 residues: Na(+)-translocating NADH-quinone reductase subunit E (197 aa).

The next 6 helical transmembrane spans lie at 11–31 (SVFI…FLAV), 35–55 (VSTA…SVPV), 76–96 (FLKF…LEMF), 108–128 (LGIY…VSFM), 139–159 (VVYG…LAGI), and 175–195 (LGIT…FSGI).

The protein belongs to the NqrDE/RnfAE family. Composed of six subunits; NqrA, NqrB, NqrC, NqrD, NqrE and NqrF.

The protein localises to the cell inner membrane. It carries out the reaction a ubiquinone + n Na(+)(in) + NADH + H(+) = a ubiquinol + n Na(+)(out) + NAD(+). Functionally, NQR complex catalyzes the reduction of ubiquinone-1 to ubiquinol by two successive reactions, coupled with the transport of Na(+) ions from the cytoplasm to the periplasm. NqrA to NqrE are probably involved in the second step, the conversion of ubisemiquinone to ubiquinol. The sequence is that of Na(+)-translocating NADH-quinone reductase subunit E from Neisseria meningitidis serogroup B (strain ATCC BAA-335 / MC58).